A 145-amino-acid polypeptide reads, in one-letter code: Actin-related protein 4A (145 aa).

The tract at residues 47–66 (IDDAANTTEDAKESDKEKGK) is disordered. Basic and acidic residues predominate over residues 55–64 (EDAKESDKEK).

This sequence belongs to the actin family. ARP4 subfamily. Expressed in roots, leaves and flowers.

The polypeptide is Actin-related protein 4A (ARP4A) (Arabidopsis thaliana (Mouse-ear cress)).